We begin with the raw amino-acid sequence, 148 residues long: Large ribosomal subunit protein bL9 (148 aa).

It belongs to the bacterial ribosomal protein bL9 family.

Binds to the 23S rRNA. In Methylobacillus flagellatus (strain ATCC 51484 / DSM 6875 / VKM B-1610 / KT), this protein is Large ribosomal subunit protein bL9.